A 1358-amino-acid polypeptide reads, in one-letter code: DNA mismatch repair protein Msh6 (1358 aa).

Residues 1–87 (MSRQSTLYSF…SSAQAVPPSS (87 aa)) form a disordered region. Phosphoserine is present on residues Ser14, Ser38, and Ser40. Residues 25-46 (AEASRQGAAASGASASRGGDAA) show a composition bias toward low complexity. Position 67 is an N6-acetyllysine (Lys67). A compositionally biased stretch (low complexity) spans 76-87 (ASSSAQAVPPSS). Phosphoserine is present on residues Ser91, Ser137, Ser200, Ser219, and Ser227. Residues 92–154 (PGDLVWAKME…KRMLKPYTGS (63 aa)) enclose the PWWP domain. The interval 197–360 (DEPSEPEEEE…VSGGGNDSSG (164 aa)) is disordered. Acidic residues-rich tracts occupy residues 198–209 (EPSEPEEEEETE) and 219–231 (SEED…EEEA). Basic residues predominate over residues 240–249 (RSSRQVKKRR). A phosphoserine mark is found at Ser252, Ser254, Ser256, and Ser261. Positions 263-273 (VEFKPDTKQEG) are enriched in basic and acidic residues. Phosphothreonine is present on Thr269. Phosphoserine is present on residues Ser274, Ser275, Ser279, and Ser280. Residues 329–351 (LSETKSTLSAFSAPQNSESQTHV) are compositionally biased toward polar residues. Thr487 carries the phosphothreonine modification. Lys503 bears the N6-acetyllysine mark. A phosphoserine mark is found at Ser827 and Ser932. The residue at position 1007 (Thr1007) is a Phosphothreonine. Residue 1132–1139 (GPNMGGKS) participates in ATP binding.

It belongs to the DNA mismatch repair MutS family. In terms of assembly, component of the DNA mismatch repair (MMR) complex composed at least of MSH2, MSH3, MSH6, PMS1 and MLH1. Heterodimer consisting of MSH2-MSH6 (MutS alpha). Forms a ternary complex with MutL alpha (MLH1-PMS1). Interacts with MCM9. Part of the BRCA1-associated genome surveillance complex (BASC), which contains BRCA1, MSH2, MSH6, MLH1, ATM, BLM, PMS2 and the RAD50-MRE11-NBS1 protein complex. This association could be a dynamic process changing throughout the cell cycle and within subnuclear domains. In terms of processing, phosphorylated by PRKCZ, which may prevent MutS alpha degradation by the ubiquitin-proteasome pathway.

It is found in the nucleus. It localises to the chromosome. In terms of biological role, component of the post-replicative DNA mismatch repair system (MMR). Heterodimerizes with MSH2 to form MutS alpha, which binds to DNA mismatches thereby initiating DNA repair. When bound, MutS alpha bends the DNA helix and shields approximately 20 base pairs, and recognizes single base mismatches and dinucleotide insertion-deletion loops (IDL) in the DNA. After mismatch binding, forms a ternary complex with the MutL alpha heterodimer, which is thought to be responsible for directing the downstream MMR events, including strand discrimination, excision, and resynthesis. ATP binding and hydrolysis play a pivotal role in mismatch repair functions. The ATPase activity associated with MutS alpha regulates binding similar to a molecular switch: mismatched DNA provokes ADP--&gt;ATP exchange, resulting in a discernible conformational transition that converts MutS alpha into a sliding clamp capable of hydrolysis-independent diffusion along the DNA backbone. This transition is crucial for mismatch repair. MutS alpha may also play a role in DNA homologous recombination repair. Recruited on chromatin in G1 and early S phase via its PWWP domain that specifically binds trimethylated 'Lys-36' of histone H3 (H3K36me3): early recruitment to chromatin to be replicated allowing a quick identification of mismatch repair to initiate the DNA mismatch repair reaction. The polypeptide is DNA mismatch repair protein Msh6 (Mus musculus (Mouse)).